A 734-amino-acid polypeptide reads, in one-letter code: Translation initiation factor IF-2 (734 aa).

The interval 39 to 110 (SKFAPRSSFT…TGKPETKKRE (72 aa)) is disordered. Positions 82–110 (DYEKRKLAEQRATRRLKGDTGKPETKKRE) are enriched in basic and acidic residues. In terms of domain architecture, tr-type G spans 238–405 (NRPPIVTVMG…SIVLQAEILD (168 aa)). A G1 region spans residues 247–254 (GHVDHGKT). 247–254 (GHVDHGKT) is a binding site for GTP. Positions 272–276 (GITQH) are G2. The tract at residues 293–296 (DTPG) is G3. GTP contacts are provided by residues 293–297 (DTPGH) and 347–350 (NKCD). The segment at 347–350 (NKCD) is G4. The G5 stretch occupies residues 383–385 (SAK).

It belongs to the TRAFAC class translation factor GTPase superfamily. Classic translation factor GTPase family. IF-2 subfamily.

It localises to the cytoplasm. Functionally, one of the essential components for the initiation of protein synthesis. Protects formylmethionyl-tRNA from spontaneous hydrolysis and promotes its binding to the 30S ribosomal subunits. Also involved in the hydrolysis of GTP during the formation of the 70S ribosomal complex. The polypeptide is Translation initiation factor IF-2 (Pelagibacter ubique (strain HTCC1062)).